We begin with the raw amino-acid sequence, 326 residues long: MAGLEDTTDLRLPSASEPIKNIVLVGRTGNGKSATGNSLIGKQVFRSETRATGVTMKCETCVAVTPCGTGINVIDTPGLFDLSVSAEYLSQEIINCLVLAEDGLHAVVLVLSVRTRISQEEEATLNTLQVIFGSQIIDYLVVLFTGGDELEANNMTLDDYLSKGCPEFLKTVLRLCGGRRILFDNRTTDEGKKVKQVQELLAHVAAIEKSTSGIPFTDEMHRKIQKEAETLREQQKEVESKDLAAAEIEKWKKHYQTEHDKNMNMMAEMLGNRLREDSERQEKMLLALRDNLEISQRQNKLNELTDNEPDLIHCGVSLRRMPCNML.

The region spanning Glu-17 to Gln-225 is the AIG1-type G domain. The segment at Gly-26 to Ser-33 is G1. GTP-binding positions include Gly-26–Ala-34 and Ser-47. The interval Gly-53–Lys-57 is G2. The segment at Asp-75–Gly-78 is G3. Positions Thr-145–Asp-148 are G4. The segment at Asp-184–Arg-186 is G5. Asn-185 contacts GTP. The stretch at Thr-217 to Lys-241 forms a coiled coil.

The protein belongs to the TRAFAC class TrmE-Era-EngA-EngB-Septin-like GTPase superfamily. AIG1/Toc34/Toc159-like paraseptin GTPase family. IAN subfamily. As to expression, expressed in radicles of the germinating seeds.

The polypeptide is Immune-associated nucleotide-binding protein 4 (Arabidopsis thaliana (Mouse-ear cress)).